Reading from the N-terminus, the 341-residue chain is Phosphate acyltransferase (341 aa).

The protein belongs to the PlsX family. Homodimer. Probably interacts with PlsY.

It localises to the cytoplasm. The enzyme catalyses a fatty acyl-[ACP] + phosphate = an acyl phosphate + holo-[ACP]. Its pathway is lipid metabolism; phospholipid metabolism. In terms of biological role, catalyzes the reversible formation of acyl-phosphate (acyl-PO(4)) from acyl-[acyl-carrier-protein] (acyl-ACP). This enzyme utilizes acyl-ACP as fatty acyl donor, but not acyl-CoA. The protein is Phosphate acyltransferase of Ehrlichia ruminantium (strain Gardel).